Consider the following 222-residue polypeptide: MSSEEVRHRAESSEARAAAVSDIQELMRRKEEIEAQIKANYDVLESQKGIGMNEPLVDCEGYPRADVDLYQVRTARHNIICLQNDHKALMKQVEEALHQLHARDKEKQARDMAEAREEAMNRRLASDSPALPKAFARVNSISPGSPASIAGLQVDDEIVEFGSVNTQNFQSLQNVGTVVQHSEGKPLNVMVIRRGEKHQLRLTPTRWAGKGLLGCNITPLQR.

A PDZ domain is found at 108–194 (QARDMAEARE…KPLNVMVIRR (87 aa)). Serine 128 is modified (phosphoserine).

Belongs to the proteasome subunit p27 family. As to quaternary structure, interacts with PSMC3. Part of a transient complex (modulator) containing PSMD9, PSMC6 and PSMC3 formed during the assembly of the 26S proteasome.

In terms of biological role, acts as a chaperone during the assembly of the 26S proteasome, specifically of the base subcomplex of the PA700/19S regulatory complex (RC). During the base subcomplex assembly is part of an intermediate PSMD9:PSMC6:PSMC3 module, also known as modulator trimer complex; PSMD9 is released during the further base assembly process. This is 26S proteasome non-ATPase regulatory subunit 9 (Psmd9) from Rattus norvegicus (Rat).